Here is a 421-residue protein sequence, read N- to C-terminus: F-box only protein 5 (421 aa).

A Phosphoserine modification is found at Ser85. Residues 114–219 are interaction with EVI5; it reads ELEASRLYED…IGKKMGLEHL (106 aa). One can recognise an F-box domain in the interval 223–273; it reads AELSRRGFVHLLANILTKLSGMDLVNLSKVSRIWKKILENNKGAFQLYSKT. The tract at residues 236 to 313 is sufficient for interaction with RPS6KA2; Prevents association of CDC20 with RPS6KA2; sequence NILTKLSGMD…KSSTWAPPKK (78 aa). The interval 236-383 is requires for efficient binding to CDC20; it reads NILTKLSGMD…SCQFEYCTKC (148 aa). The inhibits APC ubiquitin ligase activity stretch occupies residues 280–421; it reads SSKLSLHATT…KKSKKNLQRL (142 aa). The competitively blocks access of APC substrates to the D-box coreceptor formed by FZR1 and ANAPC10 stretch occupies residues 296-299; the sequence is RAAL. The segment at 348–396 adopts a ZBR-type zinc-finger fold; the sequence is SLKACVRCNFPAKYDHYLERAVCKRESCQFEYCTKCLCAYHNNKDCLNG. Zn(2+) is bound by residues Cys352, Cys355, Cys370, Cys375, Cys380, Cys383, His388, and Cys393. Positions 352–394 are allows a rapid multiple mono-ubiquitination of the APC substrate, but strongly inhibits the slow ubiquitin chain elongation catalyzed by UBCH10; sequence CVRCNFPAKYDHYLERAVCKRESCQFEYCTKCLCAYHNNKDCL. Residues 411-421 are sufficient to suppress UBE2S activity; essential for interaction with UBE2S; competitively inhibits the rapide ubiquitin chain elongation by UBE2D1 which blocks UBE2D1 with APC; indispensable for recruitment and position of FBXO5 to the catalytic site of APC; abrogates the inhibition of ubiquitin chain assembly primarily catalyzed by UBE2S; inhibits the ubiquitination by either UBE2C or UBE2D1; that stretch reads TKKSKKNLQRL.

As to quaternary structure, part of a SCF (SKP1-cullin-F-box) protein ligase complex. Interacts with BTRC; mediates proteolysis by the SCF ubiquitin ligase complex leading to activation of APC in late mitosis and subsequent mitotic progression. Interacts with FZR1/CDH1 and the N-terminal substrate-binding domain of CDC20; prevents APC activation. Also interacts with EVI5 which blocks its phosphorylation by PLK1 and prevents its subsequent binding to BTRC and degradation. Interacts simultaneously with anaphase promoting complex (APC), through at least ANAPC2, CDC23, CDC27, the APC substrate GMNN and the APC activator FZR1. Interacts with UBE2S; interferes with the activity of UBE2S mainly by disrupting the dynamic electrostatic association between the C-terminal tail of UBE2S and ANAPC2. Interacts with RPS6KA2; cooperates to induce the metaphase arrest of early blastomeres; increases and stabilizes interaction of FBXO5 with CDC20. Post-translationally, phosphorylation by CDK2 and subsequently by PLK1 triggers degradation during early mitosis through ubiquitin-mediated proteolysis by the SCF ubiquitin ligase complex containing the F-box protein BTRC. This degradation is necessary for the activation of APC in late mitosis and subsequent mitotic progression. Phosphorylated by RPS6KA2; increases and stabilizes interaction with CDC20. Ubiquitinated by the SCF(BTRC) complex following phosphorylation by PLK1. Undergoes both 'Lys-11' and 'Lys-48'-linked polyubiquitination by APC-FZR1 complex leading to degradation during G1 phase by the proteasome. Degraded through the SCF(BTRC) complex; degradation occurs during oocyte maturation, between germinal vesicle breakdown (GVBD) and meiosis I, and is required for the meiosis I-meiosis II transition. As to expression, expressed in oocytes and granulosa cells. Expressed in proliferating cells compartments in hair follicle and skin epidermis, spermatogonia, and intestinal crypts.

It is found in the nucleus. The protein resides in the cytoplasm. Its subcellular location is the cytoskeleton. It localises to the spindle. It participates in protein modification; protein ubiquitination. Its function is as follows. Regulator of APC activity during mitotic and meiotic cell cycle. During mitotic cell cycle plays a role as both substrate and inhibitor of APC-FZR1 complex. During G1 phase, plays a role as substrate of APC-FZR1 complex E3 ligase. Then switches as an inhibitor of APC-FZR1 complex during S and G2 leading to cell-cycle commitment. As APC inhibitor, prevents the degradation of APC substrates at multiple levels: by interacting with APC and blocking access of APC substrates to the D-box co-receptor, formed by FZR1 and ANAPC10; by suppressing ubiquitin ligation and chain elongation by APC by preventing the UBE2C and UBE2S activities. Plays a role in genome integrity preservation by coordinating DNA replication with mitosis through APC inhibition in interphase to stabilize CCNA2 and GMNN in order to promote mitosis and prevent rereplication and DNA damage-induced cellular senescence. During oocyte maturation, plays a role in meiosis through inactivation of APC-FZR1 complex. Inhibits APC through RPS6KA2 interaction that increases FBXO5 affiniy for CDC20 leading to the metaphase arrest of the second meiotic division before fertilization. Controls entry into the first meiotic division through inactivation of APC-FZR1 complex. Promotes migration and osteogenic differentiation of mesenchymal stem cells. This chain is F-box only protein 5, found in Mus musculus (Mouse).